The sequence spans 1118 residues: Ubiquitin carboxyl-terminal hydrolase 8 (1118 aa).

Residues 33–116 form the MIT domain; sequence TKSYVHSALK…ESLKLRYEEA (84 aa). Composition is skewed to basic and acidic residues over residues 120–146 and 158–177; these read KKLE…REDG and LDSK…KCET. Positions 120–177 are disordered; the sequence is KKLEEKDRQEEAQRLQQKRQETGREDGGTLAKGSLENVLDSKDKTQKSNGEKNEKCET. Residue S160 is modified to Phosphoserine. One can recognise a Rhodanese domain in the interval 195 to 313; it reads KNISLIIMDA…WLLCYPQYTT (119 aa). Phosphoserine occurs at positions 392 and 400. The interval 402 to 447 is disordered; it reads KNVPQIDRTKKPAVKLPEEHRIKSESTNHEQQSPQSGKVIPDRSTK. Positions 405–413 match the SH3-binding motif; sequence PQIDRTKKP. Over residues 417–429 the composition is skewed to basic and acidic residues; the sequence is LPEEHRIKSESTN. S452 carries the post-translational modification Phosphoserine. The span at 475 to 573 shows a compositional bias: basic and acidic residues; the sequence is KNKQEKELRE…AKKSVEDRGK (99 aa). 2 disordered regions span residues 475 to 648 and 679 to 746; these read KNKQ…GRIV and YPPE…ENKP. T577 carries the post-translational modification Phosphothreonine. Positions 618-645 are enriched in basic and acidic residues; it reads TFREDTDDTERNKAQREPLTRARSEEMG. The span at 716–726 shows a compositional bias: polar residues; the sequence is SYSSPDITQAI. A phosphoserine mark is found at S718 and S719. Positions 777–1109 constitute a USP domain; the sequence is TGLRNLGNTC…AAYILFYTSL (333 aa). The active-site Nucleophile is C786. Position 945 is a phosphothreonine (T945). H1067 acts as the Proton acceptor in catalysis.

The protein belongs to the peptidase C19 family. In terms of assembly, forms a ternary complex with RNF128 and OTUB1. Interacts (via C-terminal UCH catalytic domain) with OTUB1 isoform 1. Interacts with STAM2 (via SH3 domain). Interacts with DNAJB3, EGFR, EPS15, RASGRF1, RNF41, YWHAE, YWHAG and YWHAZ. Interacts with NBR1, RASGRF1, RNF41 and IST1. Associates with the ESCRT-0 complex and with microtubules. Interacts with BIRC6/bruce and KIF23/MKLP1. (Microbial infection) Interacts with Zika virus non-structural protein 1. In terms of processing, phosphorylation of Ser-718 is essential for interaction with YWHAE and for cytosol localization. Undergoes dephosphorylation at Ser-718 in the M phase. Tyrosine-phosphorylated in its N-terminal half in an EGFR-dependent manner. Ubiquitinated. Inactive form is mostly monoubiquitinated, but polyubiquitination happens too. Ubiquitination is increased in EGF-stimulated cells. Ubiquitination of active form is undetectable, suggesting a possibility that USP8 deubiquitinates itself, thereby regulating its own function.

Its subcellular location is the cytoplasm. It is found in the nucleus. The protein localises to the endosome membrane. It localises to the cell membrane. It catalyses the reaction Thiol-dependent hydrolysis of ester, thioester, amide, peptide and isopeptide bonds formed by the C-terminal Gly of ubiquitin (a 76-residue protein attached to proteins as an intracellular targeting signal).. Hydrolase that can remove conjugated ubiquitin from proteins and therefore plays an important regulatory role at the level of protein turnover by preventing degradation. Converts both 'Lys-48' an 'Lys-63'-linked ubiquitin chains. Catalytic activity is enhanced in the M phase. Involved in cell proliferation. Required to enter into S phase in response to serum stimulation. May regulate T-cell anergy mediated by RNF128 via the formation of a complex containing RNF128 and OTUB1. Probably regulates the stability of STAM2 and RASGRF1. Regulates endosomal ubiquitin dynamics, cargo sorting, membrane traffic at early endosomes, and maintenance of ESCRT-0 stability. The level of protein ubiquitination on endosomes is essential for maintaining the morphology of the organelle. Deubiquitinates EPS15 and controls tyrosine kinase stability. Removes conjugated ubiquitin from EGFR thus regulating EGFR degradation and downstream MAPK signaling. Involved in acrosome biogenesis through interaction with the spermatid ESCRT-0 complex and microtubules. Deubiquitinates BIRC6/bruce and KIF23/MKLP1. Deubiquitinates BACE1 which inhibits BACE1 lysosomal degradation and modulates BACE-mediated APP cleavage and amyloid-beta formation. The sequence is that of Ubiquitin carboxyl-terminal hydrolase 8 from Homo sapiens (Human).